The following is a 1262-amino-acid chain: Ras-specific guanine nucleotide-releasing factor 1 (1262 aa).

Positions 22-130 (DGTRKGYLSK…WVAAIARASY (109 aa)) constitute a PH 1 domain. A Phosphoserine; by PLK2 modification is found at S71. The 26-residue stretch at 208-233 (KKIKKVQSFLRGWLCRRKWKNIIQDY) folds into the IQ domain. One can recognise a DH domain in the interval 244-430 (KRNQVVFSML…EELSRIMHDE (187 aa)). Positions 460 to 588 (TFVRQGSLMQ…WTSDIIQCVD (129 aa)) constitute a PH 2 domain. A phosphoserine; by PLK2 mark is found at S581 and S617. Residues 635–749 (KVLQIRYASV…RRRKLSLNIP (115 aa)) form the N-terminal Ras-GEF domain. Residues 714–738 (DAPKSPRASRKFSSPPPLAIGTSSP) form a disordered region. S745 is modified (phosphoserine). S766 bears the Phosphoserine; by PLK2 mark. Residues 800-854 (EEIDVPATIPEKPGELSASRKHSSDVLKEESEDDQNHSDEDNTEVSPVKSPPTPK) are disordered. The segment covering 821–839 (HSSDVLKEESEDDQNHSDE) has biased composition (basic and acidic residues). The Ras-GEF domain maps to 1027–1259 (PALEIAEQLT…YESSLLIEPK (233 aa)).

Homooligomer and heterooligomer with RASGRF2. Interacts with USP8, thereby regulating its stability. Post-translationally, phosphorylated by PLK2, leading to ubiquitination and degradation by the proteasome. Ubiquitinated and degraded following phosphorylation by PLK2. In terms of processing, phosphorylated by SRC and LCK. Phosphorylation by LCK increases its capacity to stimulate the GDP/GTP exchange on Ras, whereas its phosphorylation by SRC seems not to have an effect on stimulation activity. Brain.

Promotes the exchange of Ras-bound GDP by GTP. This is Ras-specific guanine nucleotide-releasing factor 1 (Rasgrf1) from Mus musculus (Mouse).